The chain runs to 1784 residues: Histone acetyltransferase KAT6B (1784 aa).

One can recognise an SAMD1-like winged helix (WH) domain in the interval 1-77; it reads MVKLANPLYT…LASYKDPDNP (77 aa). The interval 72–98 is disordered; the sequence is KDPDNPGRFSSVKPGTFPKSTKESRGS. The H15 domain maps to 103–176; it reads RNVDWNKLLR…KDGPQYRVNY (74 aa). PHD-type zinc fingers lie at residues 213–272 and 269–320; these read IPIC…CKTC and CKTC…CRPK. Phosphoserine is present on serine 355. A negatively regulates HAT activity region spans residues 361–425; it reads GSMNAFTGRG…ECESGVEDCG (65 aa). Lysine 381 participates in a covalent cross-link: Glycyl lysine isopeptide (Lys-Gly) (interchain with G-Cter in SUMO2). The 275-residue stretch at 423-697 folds into the MYST-type HAT domain; sequence DCGRYPSVIE…LDPDSLRWTP (275 aa). The tract at residues 426–716 is catalytic; the sequence is RYPSVIEFGK…EEEREAEKEA (291 aa). The segment at 456-481 adopts a C2HC MYST-type zinc-finger fold; the sequence is LYLCEFCLKYMKSKNILLRHSKKCGW. An interaction with BRPF1 region spans residues 460–716; sequence EFCLKYMKSK…EEEREAEKEA (257 aa). Residue lysine 523 is modified to N6-acetyllysine; by autocatalysis. Acetyl-CoA is bound by residues 564 to 568 and 573 to 579; these read SCIMI and QRQGFGR. Glutamate 599 acts as the Proton donor/acceptor in catalysis. Residue serine 603 participates in acetyl-CoA binding. Disordered regions lie at residues 730-884, 904-1163, 1195-1273, and 1291-1330; these read EQEV…RPMP, RKAF…FKEV, SCNS…FQDC, and QSPQ…SPSV. A compositionally biased stretch (polar residues) spans 733–751; that stretch reads VLSTRANSRQSPAKVQSKN. An N6-acetyllysine mark is found at lysine 746, lysine 750, and lysine 752. Serine 756 is modified (phosphoserine). Residues 777 to 819 are compositionally biased toward acidic residues; that stretch reads SEEEEEEEEDEEEEDEEEEEEEEEDEEEEEEEEEEEEEEEEEN. A compositionally biased stretch (polar residues) spans 820–831; the sequence is IQSSPPRLTKPQ. The span at 835–854 shows a compositional bias: basic residues; it reads IKRKRPFVLKKKRGRKRRRI. A compositionally biased stretch (low complexity) spans 856-869; it reads SSVTTETISETTEV. Basic residues predominate over residues 904–914; sequence RKAFQHQPGKK. 2 stretches are compositionally biased toward basic and acidic residues: residues 938 to 957 and 1055 to 1064; these read MNDD…EPLK and EKPEDDLIKP. The span at 1065–1087 shows a compositional bias: acidic residues; it reads EEEEEEEEEEEEEEGEEEEEEGG. Composition is skewed to basic and acidic residues over residues 1088–1101 and 1107–1118; these read NVEK…SQEK and SPEKEDSARLDD. A compositionally biased stretch (acidic residues) spans 1119 to 1128; that stretch reads HEEEEEEDEE. Over residues 1144 to 1163 the composition is skewed to basic and acidic residues; sequence HMESAEVEKEELPRESFKEV. The span at 1209–1218 shows a compositional bias: acidic residues; the sequence is AVPESDEEPP. The segment covering 1224–1240 has biased composition (basic and acidic residues); the sequence is QKQDQKNSKEVDTEFKE. Composition is skewed to polar residues over residues 1251 to 1263 and 1291 to 1302; these read ETVQ…TQES and QSPQIATTLDDC. Positions 1271–1784 are interaction with RUNX1 and RUNX2; the sequence is QDCAETQEAC…QSLNGSYMRR (514 aa). The segment covering 1305 to 1322 has biased composition (low complexity); it reads SDHSSPVSSVHSHPGQSV.

The protein belongs to the MYST (SAS/MOZ) family. As to quaternary structure, component of the MOZ/MORF complex composed at least of ING5, KAT6A, KAT6B, MEAF6 and one of BRPF1, BRD1/BRPF2 and BRPF3. Interacts with RUNX1 and RUNX2. Post-translationally, autoacetylation at Lys-523 is required for proper function.

It is found in the nucleus. It catalyses the reaction L-lysyl-[protein] + acetyl-CoA = N(6)-acetyl-L-lysyl-[protein] + CoA + H(+). Histone acetyltransferase which may be involved in both positive and negative regulation of transcription. Required for RUNX2-dependent transcriptional activation. May be involved in cerebral cortex development. Component of the MOZ/MORF complex which has a histone H3 acetyltransferase activity. This is Histone acetyltransferase KAT6B (KAT6B) from Macaca fascicularis (Crab-eating macaque).